An 81-amino-acid polypeptide reads, in one-letter code: Protein Vpu (81 aa).

Over 1–6 (MQPIQI) the chain is Extracellular. The chain crosses the membrane as a helical span at residues 7 to 27 (AIAALVVAIIIAIVVWSIVII). Topologically, residues 28-81 (EYRKILRQRKIDRLIDRLIERAEDSGNESEGEISALVEMGVEMGHHAPWDIDDL) are cytoplasmic. 2 positions are modified to phosphoserine; by host CK2: Ser-52 and Ser-56.

This sequence belongs to the HIV-1 VPU protein family. Homopentamer. Interacts with host CD4 and BRTC; these interactions induce proteasomal degradation of CD4. Interacts with host BST2; this interaction leads to the degradation of host BST2. Interacts with host FBXW11. Interacts with host AP1M1; this interaction plays a role in the mistrafficking and subsequent degradation of host BST2. Interacts with host RANBP2; this interaction allows Vpu to down-regulate host BLM sumoylation. In terms of processing, phosphorylated by host CK2. This phosphorylation is necessary for interaction with human BTRC and degradation of CD4.

The protein localises to the host membrane. With respect to regulation, ion channel activity is inhibited by hexamethylene amiloride in vitro. In terms of biological role, enhances virion budding by targeting host CD4 and Tetherin/BST2 to proteasome degradation. Degradation of CD4 prevents any unwanted premature interactions between viral Env and its host receptor CD4 in the endoplasmic reticulum. Degradation of antiretroviral protein Tetherin/BST2 is important for virion budding, as BST2 tethers new viral particles to the host cell membrane. Mechanistically, Vpu bridges either CD4 or BST2 to BTRC, a substrate recognition subunit of the Skp1/Cullin/F-box protein E3 ubiquitin ligase, induces their ubiquitination and subsequent proteasomal degradation. The alteration of the E3 ligase specificity by Vpu seems to promote the degradation of host IKBKB, leading to NF-kappa-B down-regulation and subsequent apoptosis. Acts as a viroporin that forms an oligomeric ion channel in membranes. Modulates the host DNA repair mechanisms to promote degradation of nuclear viral cDNA in cells that are already productively infected in order to suppress immune sensing and proviral hyper-integration (superinfection). Manipulates PML-NBs and modulates SUMOylation of host BLM protein thereby enhancing its DNA-end processing activity toward viral unintegrated linear DNA. Also inhibits RAD52-mediated homologous repair of viral cDNA, preventing the generation of dead-end circular forms of single copies of the long terminal repeat and permitting sustained nucleolytic attack. The chain is Protein Vpu from Homo sapiens (Human).